Here is a 195-residue protein sequence, read N- to C-terminus: Holliday junction branch migration complex subunit RuvA (195 aa).

The interval 1–66 (MNYLIFKVIY…LIIKDLYGFR (66 aa)) is domain I. Positions 67-141 (TYNERLLFID…KYINKVNDKN (75 aa)) are domain II. Asparagine 141 is a region of interest (flexible linker). Residues 141-195 (NNWAKELSIGLENLGYTKKDIEYAITKVKINSQQDIDISEIISSAIKEISLRHEN) form a domain III region.

It belongs to the RuvA family. Homotetramer. Forms an RuvA(8)-RuvB(12)-Holliday junction (HJ) complex. HJ DNA is sandwiched between 2 RuvA tetramers; dsDNA enters through RuvA and exits via RuvB. An RuvB hexamer assembles on each DNA strand where it exits the tetramer. Each RuvB hexamer is contacted by two RuvA subunits (via domain III) on 2 adjacent RuvB subunits; this complex drives branch migration. In the full resolvosome a probable DNA-RuvA(4)-RuvB(12)-RuvC(2) complex forms which resolves the HJ.

Its subcellular location is the cytoplasm. Its function is as follows. The RuvA-RuvB-RuvC complex processes Holliday junction (HJ) DNA during genetic recombination and DNA repair, while the RuvA-RuvB complex plays an important role in the rescue of blocked DNA replication forks via replication fork reversal (RFR). RuvA specifically binds to HJ cruciform DNA, conferring on it an open structure. The RuvB hexamer acts as an ATP-dependent pump, pulling dsDNA into and through the RuvAB complex. HJ branch migration allows RuvC to scan DNA until it finds its consensus sequence, where it cleaves and resolves the cruciform DNA. This chain is Holliday junction branch migration complex subunit RuvA, found in Ureaplasma parvum serovar 3 (strain ATCC 27815 / 27 / NCTC 11736).